Consider the following 74-residue polypeptide: U3-agatoxin-Ao1b (74 aa).

Positions 1 to 20 are cleaved as a signal peptide; the sequence is MKAAISLIIFFAILFVVIEA. Positions 21-34 are excised as a propeptide; it reads ISYEEGKELFQKER. Cystine bridges form between cysteine 37–cysteine 53, cysteine 44–cysteine 58, cysteine 52–cysteine 68, and cysteine 60–cysteine 66. Residue serine 72 is modified to Serine amide.

This sequence belongs to the neurotoxin 07 (Beta/delta-agtx) family. 02 (aga-3) subfamily. Expressed by the venom gland.

It localises to the secreted. Its function is as follows. Insecticidal neurotoxin that induces an irreversible spastic paralysis when injected into insects. Modifies presynaptic voltage-gated sodium channels (Nav), causing them to open at the normal resting potential of the nerve. This leads to spontaneous release of neurotransmitter and repetitive action potentials in motor neurons. This chain is U3-agatoxin-Ao1b, found in Agelena orientalis (Funnel-web spider).